Reading from the N-terminus, the 394-residue chain is Large ribosomal subunit protein bL27m (394 aa).

The N-terminal 34 residues, 1-34 (MSFIKQVGKLIRPNDYSSSIFQTSFLNNVIQVRT), are a transit peptide targeting the mitochondrion. 2 disordered regions span residues 36 to 57 (TKRA…LGPK) and 145 to 181 (AEAE…QRAS). Residues 145–170 (AEAEKEENHMSRKEFLQQPELEKTRQ) are compositionally biased toward basic and acidic residues.

It belongs to the bacterial ribosomal protein bL27 family.

Its subcellular location is the mitochondrion. In terms of biological role, component of the large subunit of mitochondrial ribosome. The sequence is that of Large ribosomal subunit protein bL27m (MRPL2) from Debaryomyces hansenii (strain ATCC 36239 / CBS 767 / BCRC 21394 / JCM 1990 / NBRC 0083 / IGC 2968) (Yeast).